The primary structure comprises 441 residues: Nucleolar and spindle-associated protein 1 (441 aa).

Disordered stretches follow at residues 47–186 (ARKG…PNFK) and 216–267 (MNEL…LGLK). Polar residues-rich tracts occupy residues 56–74 (ESQTSASSCDETEIQISNQ) and 100–116 (DSQQNHSEIKISNPTEF). Residues 117-126 (QNHEKQESQD) show a composition bias toward basic and acidic residues. Residue S124 is modified to Phosphoserine; by ATM. Residue S135 is modified to Phosphoserine. A compositionally biased stretch (basic and acidic residues) spans 152 to 171 (RDSKVPSEGKKSLYTDESSK). T182 carries the post-translational modification Phosphothreonine. The interaction with microtubules stretch occupies residues 237-382 (GRLSVASTPI…HKGKLKPWGQ (146 aa)). S240 is modified (phosphoserine). The segment covering 241–264 (VASTPISQRRSQGRSCGPASQSTL) has biased composition (polar residues). T244 bears the Phosphothreonine mark. Phosphoserine is present on residues S247, S255, S269, S276, and S311. Residues 286-319 (AATKDNEHKRSLTKTPARKSAHVTVSGGTPKGEA) form a disordered region. Phosphothreonine occurs at positions 314, 338, and 349. 2 positions are modified to phosphoserine: S352 and S363. The KEN box signature appears at 384 to 390 (KENNYLN). The interval 401–427 (KTYKQPHLQTKEEQRKKREQERKEKKA) is disordered. Residues 407 to 432 (HLQTKEEQRKKREQERKEKKAKVLGM) are a coiled coil. Over residues 409–424 (QTKEEQRKKREQERKE) the composition is skewed to basic and acidic residues. K411 bears the N6-acetyllysine mark.

The protein belongs to the NUSAP family. As to quaternary structure, interacts with DNA and microtubules. Microtubule bundling is inhibited by IPO7, KPNA2 and KPNB1 while association with DNA is also inhibited by IPO7 and KPNA2. Ubiquitinated. Ubiquitination by FZR1 may lead to proteasome-dependent degradation of this protein. Post-translationally, phosphorylation by ATM in G2/M-phase induces mitotic arrest.

Its subcellular location is the cytoplasm. The protein localises to the nucleus. The protein resides in the nucleolus. It is found in the cytoskeleton. It localises to the spindle. Its subcellular location is the chromosome. In terms of biological role, microtubule-associated protein with the capacity to bundle and stabilize microtubules. May associate with chromosomes and promote the organization of mitotic spindle microtubules around them. The sequence is that of Nucleolar and spindle-associated protein 1 (NUSAP1) from Homo sapiens (Human).